Here is a 228-residue protein sequence, read N- to C-terminus: Urease accessory protein UreF (228 aa).

This sequence belongs to the UreF family. UreD, UreF and UreG form a complex that acts as a GTP-hydrolysis-dependent molecular chaperone, activating the urease apoprotein by helping to assemble the nickel containing metallocenter of UreC. The UreE protein probably delivers the nickel.

It localises to the cytoplasm. In terms of biological role, required for maturation of urease via the functional incorporation of the urease nickel metallocenter. This chain is Urease accessory protein UreF, found in Yersinia pestis bv. Antiqua (strain Antiqua).